A 262-amino-acid chain; its full sequence is Acyl-[acyl-carrier-protein]--UDP-N-acetylglucosamine O-acyltransferase (262 aa).

The protein belongs to the transferase hexapeptide repeat family. LpxA subfamily. Homotrimer.

It localises to the cytoplasm. The catalysed reaction is a (3R)-hydroxyacyl-[ACP] + UDP-N-acetyl-alpha-D-glucosamine = a UDP-3-O-[(3R)-3-hydroxyacyl]-N-acetyl-alpha-D-glucosamine + holo-[ACP]. It functions in the pathway glycolipid biosynthesis; lipid IV(A) biosynthesis; lipid IV(A) from (3R)-3-hydroxytetradecanoyl-[acyl-carrier-protein] and UDP-N-acetyl-alpha-D-glucosamine: step 1/6. Involved in the biosynthesis of lipid A, a phosphorylated glycolipid that anchors the lipopolysaccharide to the outer membrane of the cell. The protein is Acyl-[acyl-carrier-protein]--UDP-N-acetylglucosamine O-acyltransferase of Burkholderia ambifaria (strain MC40-6).